Reading from the N-terminus, the 305-residue chain is Methionyl-tRNA formyltransferase (305 aa).

109 to 112 (SLLP) provides a ligand contact to (6S)-5,6,7,8-tetrahydrofolate.

Belongs to the Fmt family.

It catalyses the reaction L-methionyl-tRNA(fMet) + (6R)-10-formyltetrahydrofolate = N-formyl-L-methionyl-tRNA(fMet) + (6S)-5,6,7,8-tetrahydrofolate + H(+). Its function is as follows. Attaches a formyl group to the free amino group of methionyl-tRNA(fMet). The formyl group appears to play a dual role in the initiator identity of N-formylmethionyl-tRNA by promoting its recognition by IF2 and preventing the misappropriation of this tRNA by the elongation apparatus. In Roseobacter denitrificans (strain ATCC 33942 / OCh 114) (Erythrobacter sp. (strain OCh 114)), this protein is Methionyl-tRNA formyltransferase.